Here is a 294-residue protein sequence, read N- to C-terminus: Signal peptidase I (294 aa).

Positions 1-59 (MTETTDSPSERQPGPAEPELSSRDPDIAGQVFDAAPFDAAPDADSEGDSKAAKTDEPRP) are disordered. Residues 1-66 (MTETTDSPSE…PRPAKRSTLR (66 aa)) are Cytoplasmic-facing. A compositionally biased stretch (basic and acidic residues) spans 47 to 59 (GDSKAAKTDEPRP). Residues 67 to 87 (EFAVLAVIAVVLYYVMLTFVA) form a helical membrane-spanning segment. The Extracellular portion of the chain corresponds to 88-294 (RPYLIPSESM…VRSVNPQQGR (207 aa)). Active-site residues include Ser-96 and Lys-174.

This sequence belongs to the peptidase S26 family.

It is found in the cell membrane. The enzyme catalyses Cleavage of hydrophobic, N-terminal signal or leader sequences from secreted and periplasmic proteins.. This Mycobacterium tuberculosis (strain CDC 1551 / Oshkosh) protein is Signal peptidase I (lepB).